The sequence spans 197 residues: MYVPMVVEQSGRGERAYDIYSRLLKERIVFLGGEINDQVADLVIAQLLFLEAEDPDKDIHLYINSPGGVVTAGMAIFDTMNYIKAPVSTICIGQAASMGAVLLTAGEKGKRFALPHARIMIHQPSGGSRGQATDIMIQAEEILRMKRELNRLLADLSGQPVERLEQDTERDFFMSAEEARNYGLIDAVMTRRPDGGD.

The Nucleophile role is filled by serine 97. Histidine 122 is an active-site residue.

The protein belongs to the peptidase S14 family. Fourteen ClpP subunits assemble into 2 heptameric rings which stack back to back to give a disk-like structure with a central cavity, resembling the structure of eukaryotic proteasomes.

The protein resides in the cytoplasm. The catalysed reaction is Hydrolysis of proteins to small peptides in the presence of ATP and magnesium. alpha-casein is the usual test substrate. In the absence of ATP, only oligopeptides shorter than five residues are hydrolyzed (such as succinyl-Leu-Tyr-|-NHMec, and Leu-Tyr-Leu-|-Tyr-Trp, in which cleavage of the -Tyr-|-Leu- and -Tyr-|-Trp bonds also occurs).. Its function is as follows. Cleaves peptides in various proteins in a process that requires ATP hydrolysis. Has a chymotrypsin-like activity. Plays a major role in the degradation of misfolded proteins. In Trichlorobacter lovleyi (strain ATCC BAA-1151 / DSM 17278 / SZ) (Geobacter lovleyi), this protein is ATP-dependent Clp protease proteolytic subunit.